Consider the following 827-residue polypeptide: SH3-containing GRB2-like protein 3-interacting protein 1 (827 aa).

Disordered stretches follow at residues 1–116, 143–199, and 223–278; these read MMEG…SHKK, IGNI…ALAP, and IWGS…QAAT. Basic and acidic residues-rich tracts occupy residues 16 to 32 and 40 to 53; these read RKKE…DRDG and LPYH…REGG. Phosphoserine occurs at positions 78, 104, 105, 107, 149, 151, 156, and 169. Phosphothreonine is present on residues threonine 180 and threonine 182. Serine 236 is modified (phosphoserine). The segment covering 245 to 260 has biased composition (pro residues); sequence TGTPPPLPPKTVPATP. 2 positions are modified to phosphothreonine: threonine 247 and threonine 259. 6 positions are modified to phosphoserine: serine 265, serine 287, serine 289, serine 300, serine 316, and serine 319. The segment covering 265–276 has biased composition (polar residues); that stretch reads SPLTVATGNDQA. The disordered stretch occupies residues 315-505; that stretch reads FSDASPEHVT…IAPLARAEST (191 aa). Residues 319–333 are compositionally biased toward basic and acidic residues; the sequence is SPEHVTPELTPREKV. Phosphothreonine occurs at positions 324, 328, and 335. Low complexity predominate over residues 335 to 345; the sequence is TPPAASDIPAD. A compositionally biased stretch (pro residues) spans 346–369; the sequence is SPTPGPPGPPGSAGPPGPPGPRNV. Serine 371 is modified (phosphoserine). Basic and acidic residues predominate over residues 377 to 392; the sequence is EVQKKVAEQTFIKDDY. Position 398 is a phosphoserine (serine 398). At threonine 409 the chain carries Phosphothreonine. Over residues 436–455 the composition is skewed to low complexity; that stretch reads ASGASSPARPATPLVPCSCS. Pro residues predominate over residues 456-474; the sequence is TPPPPPPRPPSRPKLPPGK. Residues 481–491 are compositionally biased toward low complexity; that stretch reads SRPFSPPIHSS. Serine 485 is modified (phosphoserine). An MHD domain is found at 558–826; the sequence is TLPVAAAFTE…RFAAGKYLAD (269 aa). 4 interaction with DPF motifs-containing proteins regions span residues 560–566, 592–594, 666–669, and 812–817; these read PVAAAFT, SFP, TYYN, and SLIKKR. The necessary and sufficient to mediate interaction with CANX stretch occupies residues 648–827; the sequence is MPNLMTHLKK…FAAGKYLADN (180 aa).

In terms of assembly, interacts with proteins essential or regulating the formation of functional clathrin-coated pits. Interacts with CANX. Interacts with AP2A1. Interacts with EPS15. Interacts with SH3GL3. Interacts with AMPH. Interacts with ITSN1 (via SH3 domains). Interacts with and REPS1. Specifically expressed in brain. Also detected at lower levels in spleen and adipose tissue.

It localises to the membrane. Its subcellular location is the clathrin-coated pit. Its function is as follows. May function in clathrin-mediated endocytosis. Has both a membrane binding/tubulating activity and the ability to recruit proteins essential to the formation of functional clathrin-coated pits. Has a preference for membranes enriched in phosphatidylserine and phosphoinositides and is required for the endocytosis of the transferrin receptor. May also bind tubulin. May play a role in the regulation of energy homeostasis. This Psammomys obesus (Fat sand rat) protein is SH3-containing GRB2-like protein 3-interacting protein 1 (SGIP1).